The chain runs to 117 residues: MIAFTPSAGLRSLKVASVLKRALAQLFIREFYDLSSMLSISGVKVSEDTRNATVFVAIGDKSVDGDEVVAALNDASNSIRRAVFRYLKLRYVPRLHFKLDVEFDNFLRISEIMATTK.

The protein belongs to the RbfA family. In terms of assembly, monomer. Binds 30S ribosomal subunits, but not 50S ribosomal subunits or 70S ribosomes.

The protein localises to the cytoplasm. One of several proteins that assist in the late maturation steps of the functional core of the 30S ribosomal subunit. Associates with free 30S ribosomal subunits (but not with 30S subunits that are part of 70S ribosomes or polysomes). Required for efficient processing of 16S rRNA. May interact with the 5'-terminal helix region of 16S rRNA. In Anaplasma marginale (strain St. Maries), this protein is Ribosome-binding factor A.